A 104-amino-acid chain; its full sequence is MNKTVAVFFAVICVICVIKSCKTLKVSDLKEPESYKEAMKMAEKDPPSTRDLAKNIVKANRENCMPNCALVPTCHILSPECCPVKKPICYDLDIVKEAMKKQQG.

The first 23 residues, 1 to 23 (MNKTVAVFFAVICVICVIKSCKT), serve as a signal peptide directing secretion.

It belongs to the scoloptoxin-10 family. Post-translationally, contains 3 disulfide bonds. As to expression, expressed by the venom gland.

Its subcellular location is the secreted. The sequence is that of U-scoloptoxin(10)-Cw1a from Cormocephalus westwoodi (Westwood's green centipede).